A 475-amino-acid chain; its full sequence is MSPKTETKAGTGFKAGVKDYKLTYYTPDYVVKDTDILAAFRMTPQPGVPPEECGAAVAAESSTGTWTTVWTDGLTSLDRYKGRCYDLEPVAGEENQYIAYVAYPIDLFEEGSVTNLFTSIVGNVFGFKALRALRLEDLRIPVAYVKTFQGPPHGIQVERDKLNKYGRPLLGCTIKPKLGLSAKNYGRACYECLRGGLDFTKDDENVNSQPFMRWRDRFLFVAEAIFKSQSETGEIKGHYLNATAATCEEMLKRAAYAKELGVPIIMHDYLTGGFTANTSLAAYCRDNGLLLHIHRAMHAVIDRQKNHGIHFRVLAKALRLSGGDHLHSGTVVGKLEGEREVTLGFVDLMRDDYIEKDRSRGVYFTQDWCSMGGVMPVASGGIHVWHMPALTEIFGDDSCLQFGGGTLGHPWGNAPGAVANRVALEACVQARNEGRDLAREGNDVIRAACKWSPELAAACEVWKEIKFEFETIDTL.

The propeptide occupies 1–2 (MS). Pro3 carries the N-acetylproline modification. Lys14 carries the N6,N6,N6-trimethyllysine modification. Substrate-binding residues include Asn123 and Thr173. Lys175 acts as the Proton acceptor in catalysis. A substrate-binding site is contributed by Lys177. Residues Lys201, Asp203, and Glu204 each coordinate Mg(2+). Position 201 is an N6-carboxylysine (Lys201). The Proton acceptor role is filled by His294. Arg295, His327, and Ser379 together coordinate substrate.

This sequence belongs to the RuBisCO large chain family. Type I subfamily. As to quaternary structure, heterohexadecamer of 8 large chains and 8 small chains; disulfide-linked. The disulfide link is formed within the large subunit homodimers. It depends on Mg(2+) as a cofactor. In terms of processing, the disulfide bond which can form in the large chain dimeric partners within the hexadecamer appears to be associated with oxidative stress and protein turnover.

The protein localises to the plastid. It is found in the chloroplast. The catalysed reaction is 2 (2R)-3-phosphoglycerate + 2 H(+) = D-ribulose 1,5-bisphosphate + CO2 + H2O. It catalyses the reaction D-ribulose 1,5-bisphosphate + O2 = 2-phosphoglycolate + (2R)-3-phosphoglycerate + 2 H(+). RuBisCO catalyzes two reactions: the carboxylation of D-ribulose 1,5-bisphosphate, the primary event in carbon dioxide fixation, as well as the oxidative fragmentation of the pentose substrate in the photorespiration process. Both reactions occur simultaneously and in competition at the same active site. The chain is Ribulose bisphosphate carboxylase large chain from Mesostigma viride (Green alga).